The primary structure comprises 99 residues: Antitoxin VapB47 (99 aa).

The protein belongs to the phD/YefM antitoxin family.

Functionally, antitoxin component of a type II toxin-antitoxin (TA) system. In Mycobacterium tuberculosis (strain CDC 1551 / Oshkosh), this protein is Antitoxin VapB47 (vapB47).